Here is a 638-residue protein sequence, read N- to C-terminus: Chaperone protein HtpG (638 aa).

The interval 1 to 346 is a; substrate-binding; it reads MSQQETHGFQ…SNDLPLNVSR (346 aa). Residues 347–563 are b; sequence EILQDNKVTT…EGEMSTQMIK (217 aa). The segment at 564–638 is c; that stretch reads LMEAAGQAVP…MNEMLLAKLK (75 aa).

It belongs to the heat shock protein 90 family. Homodimer.

The protein localises to the cytoplasm. Its function is as follows. Molecular chaperone. Has ATPase activity. The protein is Chaperone protein HtpG of Shewanella sediminis (strain HAW-EB3).